The following is a 486-amino-acid chain: Elastin-binding protein EbpS (486 aa).

Residues 1 to 40 are compositionally biased toward basic and acidic residues; it reads MSNNFKDDFEKNRQSIDTNSHQDHTEDVEKDQSELEHQDT. A disordered region spans residues 1–314; the sequence is MSNNFKDDFE…HHDRDKERKK (314 aa). Residues 2-204 are Extracellular-facing; that stretch reads SNNFKDDFEK…ESKDHHSGKK (203 aa). The interval 14–34 is elastin-binding; that stretch reads QSIDTNSHQDHTEDVEKDQSE. Polar residues predominate over residues 64–85; it reads TNHNKQVHNESQTSEDNVQNEA. 3 stretches are compositionally biased toward basic and acidic residues: residues 103–117, 126–160, and 180–199; these read EPSH…EEGY, DKSH…KSEA, and SKDK…SKDH. Over residues 204–225 the composition is skewed to low complexity; the sequence is KGAAIGAGTAGVAGAAGAMGVS. A helical membrane pass occupies residues 205–225; that stretch reads GAAIGAGTAGVAGAAGAMGVS. Residues 226–319 are Cytoplasmic-facing; sequence KAKKHSNDAQ…KERKKGGMAK (94 aa). Residues 233–246 are compositionally biased toward polar residues; that stretch reads DAQNKSNSGKVNNS. Basic and acidic residues predominate over residues 247-259; the sequence is TEDKASEDKSKEH. Over residues 278 to 297 the composition is skewed to low complexity; the sequence is GAASNSASAASKPHASNNAS. Basic and acidic residues predominate over residues 300–314; sequence NDEHDHHDRDKERKK. Residues 320–340 traverse the membrane as a helical segment; that stretch reads VLLPLIAAVLIIGALAIFGGM. The Extracellular portion of the chain corresponds to 341–486; sequence ALNNHNNGTK…IRNGQQIVIP (146 aa). The interval 351 to 440 is disordered; sequence ENKIANTNKN…QRQGGGQRHT (90 aa). Over residues 361–398 the composition is skewed to basic and acidic residues; sequence NADESKDKDTSKDASKDKSKSTDSDKSKDDQDKATKDE. A compositionally biased stretch (low complexity) spans 403–431; that stretch reads QNNANQANNQAQNNQNQQQANQNQQQQQQ. The 49-residue stretch at 437–485 folds into the LysM domain; that stretch reads QRHTVNGQENLYRIAIQYYGSGSPENVEKIRRANGLSGNNIRNGQQIVI.

The protein resides in the cell membrane. In terms of biological role, promotes binding of soluble elastin peptides and tropoelastin to S.aureus cells although it is not able to promote bacterial adherence to immobilized elastin and, therefore, is not a microbial surface component recognizing adhesive matrix molecule (MSCRAMM). In Staphylococcus aureus (strain MRSA252), this protein is Elastin-binding protein EbpS (ebpS).